The sequence spans 353 residues: Hydrazine synthase subunit gamma (353 aa).

The N-terminal stretch at 1–39 is a signal peptide; it reads MAREMRLGGKERMKTGVVKIGLVAALGVVGLISAGGVYA. Heme c is bound by residues cysteine 102, cysteine 105, and histidine 106. Ca(2+) contacts are provided by aspartate 118, leucine 119, glutamate 122, glycine 123, serine 126, asparagine 129, leucine 139, and proline 141. The heme c site is built by cysteine 165, cysteine 225, cysteine 228, and histidine 229. In terms of domain architecture, Cytochrome c spans 209 to 353; that stretch reads EAQKRGQKIF…QDLVEYLKAL (145 aa). Positions 296, 306, 307, and 308 each coordinate Ca(2+). Residue histidine 332 coordinates heme c.

Part of the hydrazine synthase complex that forms an elongated dimer of heterotrimers composed of one alpha, one beta and one gamma subunit. Requires heme c as cofactor.

The protein resides in the anammoxosome. The catalysed reaction is hydrazine + 3 Fe(III)-[cytochrome c] + H2O = nitric oxide + 3 Fe(II)-[cytochrome c] + NH4(+) + 2 H(+). The protein operates within nitrogen metabolism. Component of the hydrazine synthase complex that catalyzes the condensation of nitric oxide (NO) with ammonium to form hydrazine. The gamma subunit catalyzes the first half-reaction, i.e. the three-electron reduction of nitric oxide to hydroxylamine; it may obtain electrons from the triheme cytochrome c kuste2854. Is involved in anaerobic ammonium oxidation (anammox), a biological process in which nitrite is used as the electron acceptor in the conversion of ammonium to dinitrogen gas (N2) and water; this bacterial process has a major role in the Earth's nitrogen cycle and has been estimated to synthesize up to 50% of the dinitrogen gas emitted into our atmosphere from the oceans. The polypeptide is Hydrazine synthase subunit gamma (Kuenenia stuttgartiensis).